A 145-amino-acid chain; its full sequence is Hemoglobin subunit beta (145 aa).

Residues 1–145 enclose the Globin domain; that stretch reads MLTAEEKAAV…VANALAHRYH (145 aa). The residue at position 11 (T11) is a Phosphothreonine. K58 carries the N6-acetyllysine modification. Position 62 (H62) interacts with heme b. N6-acetyllysine is present on K81. A heme b-binding site is contributed by H91. The residue at position 92 (C92) is an S-nitrosocysteine.

This sequence belongs to the globin family. In terms of assembly, heterotetramer of two alpha chains and two beta chains. Red blood cells.

Involved in oxygen transport from the lung to the various peripheral tissues. This Alces alces alces (European moose) protein is Hemoglobin subunit beta (HBB).